A 119-amino-acid polypeptide reads, in one-letter code: NADH-quinone oxidoreductase subunit A (119 aa).

A run of 3 helical transmembrane segments spans residues 7–27 (FPVLLFIIIGVGLGLALMTIG), 63–83 (LIAILFILFDLETAFLFPWGV), and 88–108 (IGWPGFFAMGVFLLEFLVGFV).

It belongs to the complex I subunit 3 family. In terms of assembly, NDH-1 is composed of 14 different subunits. Subunits NuoA, H, J, K, L, M, N constitute the membrane sector of the complex.

It is found in the cell inner membrane. It catalyses the reaction a quinone + NADH + 5 H(+)(in) = a quinol + NAD(+) + 4 H(+)(out). In terms of biological role, NDH-1 shuttles electrons from NADH, via FMN and iron-sulfur (Fe-S) centers, to quinones in the respiratory chain. The immediate electron acceptor for the enzyme in this species is believed to be ubiquinone. Couples the redox reaction to proton translocation (for every two electrons transferred, four hydrogen ions are translocated across the cytoplasmic membrane), and thus conserves the redox energy in a proton gradient. This chain is NADH-quinone oxidoreductase subunit A, found in Ralstonia nicotianae (strain ATCC BAA-1114 / GMI1000) (Ralstonia solanacearum).